A 169-amino-acid chain; its full sequence is Large ribosomal subunit protein uL10 (169 aa).

It belongs to the universal ribosomal protein uL10 family. In terms of assembly, part of the ribosomal stalk of the 50S ribosomal subunit. The N-terminus interacts with L11 and the large rRNA to form the base of the stalk. The C-terminus forms an elongated spine to which L12 dimers bind in a sequential fashion forming a multimeric L10(L12)X complex.

Forms part of the ribosomal stalk, playing a central role in the interaction of the ribosome with GTP-bound translation factors. In Orientia tsutsugamushi (strain Boryong) (Rickettsia tsutsugamushi), this protein is Large ribosomal subunit protein uL10.